A 422-amino-acid chain; its full sequence is Ribonuclease Y (422 aa).

The KH domain occupies 112 to 172; it reads TTNIVKLPSD…IRREIATRTL (61 aa). An HD domain is found at 238–331; sequence VLAHSIEVAK…VAIADSISAS (94 aa).

Belongs to the RNase Y family.

In terms of biological role, endoribonuclease that initiates mRNA decay. This is Ribonuclease Y from Mycoplasma mycoides.